We begin with the raw amino-acid sequence, 93 residues long: Small ribosomal subunit protein uS15 (93 aa).

This sequence belongs to the universal ribosomal protein uS15 family. As to quaternary structure, part of the 30S ribosomal subunit. Forms a bridge to the 50S subunit in the 70S ribosome, contacting the 23S rRNA.

In terms of biological role, one of the primary rRNA binding proteins, it binds directly to 16S rRNA where it helps nucleate assembly of the platform of the 30S subunit by binding and bridging several RNA helices of the 16S rRNA. Forms an intersubunit bridge (bridge B4) with the 23S rRNA of the 50S subunit in the ribosome. This is Small ribosomal subunit protein uS15 from Anaplasma marginale (strain St. Maries).